An 84-amino-acid chain; its full sequence is Putative membrane protein insertion efficiency factor (84 aa).

It belongs to the UPF0161 family.

It localises to the cell inner membrane. Its function is as follows. Could be involved in insertion of integral membrane proteins into the membrane. The protein is Putative membrane protein insertion efficiency factor of Shewanella amazonensis (strain ATCC BAA-1098 / SB2B).